Reading from the N-terminus, the 1062-residue chain is Inactive tyrosine-protein kinase 7 (1062 aa).

Residues 1–22 (MGARPLTLLRALLLPLLAGAQA) form the signal peptide. 7 Ig-like C2-type domains span residues 23 to 112 (AIVF…ASFN), 120 to 210 (PVVL…FTLS), 217 to 309 (ARVV…EATL), 301 to 399 (PPIV…VNIT), 404 to 489 (PTWL…ARVQ), 495 to 578 (KFTP…HVQL), and 570 to 672 (GQIR…APLL). The Extracellular portion of the chain corresponds to 23-696 (AIVFIKEPSS…SPPPYKMIQT (674 aa)). A disulfide bond links Cys45 and Cys93. N-linked (GlcNAc...) asparagine glycans are attached at residues Asn98, Asn108, Asn176, Asn206, Asn260, and Asn275. The cysteines at positions 142 and 192 are disulfide-linked. Disulfide bonds link Cys238-Cys293 and Cys335-Cys383. N-linked (GlcNAc...) asparagine glycans are attached at residues Asn397, Asn455, Asn559, and Asn638. 3 disulfides stabilise this stretch: Cys425–Cys473, Cys516–Cys562, and Cys605–Cys656. Residues 697 to 717 (IGLSVGAAVAYIIAVLGLMFY) form a helical membrane-spanning segment. The Cytoplasmic portion of the chain corresponds to 718–1062 (CKKRCKAKRL…LGDSPADSKQ (345 aa)). Disordered regions lie at residues 728 to 750 (QKQP…QNGQ) and 1039 to 1062 (NPKD…DSKQ). Residues 786 to 1062 (ASLQPITTLG…LGDSPADSKQ (277 aa)) form an interaction with CTNNB1 region. In terms of domain architecture, Protein kinase; inactive spans 788-1058 (LQPITTLGKS…IASTLGDSPA (271 aa)). Ser1056 is modified (phosphoserine).

This sequence belongs to the protein kinase superfamily. Tyr protein kinase family. Insulin receptor subfamily. As to quaternary structure, interacts with CTNNB1. MMP14 cleaves PTK7 between Pro-613 and Leu-614 generating an N-terminal soluble (70 kDa) fragment and a membrane C-terminal (50 kDa) fragment. Proteolysis by MMP14 regulates PTK7 function in non-canonical Wnt signaling pathway. In terms of tissue distribution, expressed at high levels in lung and un-pregnant uterus among adult tissues, and in the tail, limbs, somites, gut and craniofacial regions among embryonic tissues.

It is found in the membrane. It localises to the cell junction. Its function is as follows. Inactive tyrosine kinase involved in Wnt signaling pathway. Component of both the non-canonical (also known as the Wnt/planar cell polarity signaling) and the canonical Wnt signaling pathway. Functions in cell adhesion, cell migration, cell polarity, proliferation, actin cytoskeleton reorganization and apoptosis. Has a role in embryogenesis, epithelial tissue organization and angiogenesis. The protein is Inactive tyrosine-protein kinase 7 (Ptk7) of Mus musculus (Mouse).